We begin with the raw amino-acid sequence, 199 residues long: Prolactin-1 (199 aa).

3 disulfide bridges follow: Cys-4–Cys-11, Cys-58–Cys-174, and Cys-191–Cys-199. Asn-60 is a glycosylation site (N-linked (GlcNAc...) asparagine).

The protein belongs to the somatotropin/prolactin family. Glycosylated.

The protein localises to the secreted. This Crocodylus novaeguineae (Crocodile) protein is Prolactin-1.